The primary structure comprises 396 residues: Tryptophan synthase beta chain (396 aa).

Lysine 86 is subject to N6-(pyridoxal phosphate)lysine.

It belongs to the TrpB family. Tetramer of two alpha and two beta chains. Pyridoxal 5'-phosphate serves as cofactor.

The catalysed reaction is (1S,2R)-1-C-(indol-3-yl)glycerol 3-phosphate + L-serine = D-glyceraldehyde 3-phosphate + L-tryptophan + H2O. It functions in the pathway amino-acid biosynthesis; L-tryptophan biosynthesis; L-tryptophan from chorismate: step 5/5. Its function is as follows. The beta subunit is responsible for the synthesis of L-tryptophan from indole and L-serine. The sequence is that of Tryptophan synthase beta chain from Aliivibrio fischeri (strain ATCC 700601 / ES114) (Vibrio fischeri).